The following is a 92-amino-acid chain: Small ribosomal subunit protein uS19c (92 aa).

It belongs to the universal ribosomal protein uS19 family.

The protein resides in the plastid. It localises to the chloroplast. Functionally, protein S19 forms a complex with S13 that binds strongly to the 16S ribosomal RNA. The protein is Small ribosomal subunit protein uS19c of Acorus calamus (Sweet flag).